Here is a 71-residue protein sequence, read N- to C-terminus: Palustrin-Ca (71 aa).

The N-terminal stretch at 1–22 (MFTLKKSLLLLFFLGTISLSLC) is a signal peptide. The propeptide occupies 23–40 (EQERDADGDEGEVEEVKR). Cys-63 and Cys-69 are disulfide-bonded.

It belongs to the frog skin active peptide (FSAP) family. Brevinin subfamily. In terms of tissue distribution, expressed by the skin glands.

Its subcellular location is the secreted. It localises to the target cell membrane. Antibacterial peptide with amphipathic alpha-helical structure that exhibits potent broad-spectrum activity against Gram-positive and -negative bacteria. It is active against Listeria ATCC 54004 (MIC=30 ug/ml), S.aureus ATCC 25923 (MIC=7.8 ug/ml), S.suis 2 CVCC 606 (MIC=31.25 ug/ml), B.subtilis ADB403 (30 ug/ml), K.pneumoniae ATCC 700603 (MIC=60 ug/ml) and P.aeruginosa ATCC 227853 (MIC=30 ug/ml). Does not show activity against Salmonella ATCC 20020 and the fungus Candida albicans. Is also cytotoxic to HeLa cells at high concentrations. In addition, shows a strong antitumor activity but only a little hemolytic activity. Despite the presence of a Gly residue at position 10, this alpha-helical peptide remains relatively rigid, not exhibiting any significant flexibility during the molecular dynamics simulation. The peptide shows a preference for a position parallel to the target membrane that suggests it exerts its antimicrobial activity through a non-pore-forming mechanism of action, such as the carpet model or the interfacial activity model. The chain is Palustrin-Ca from Aquarana catesbeiana (American bullfrog).